Here is a 241-residue protein sequence, read N- to C-terminus: 2-C-methyl-D-erythritol 4-phosphate cytidylyltransferase (241 aa).

This sequence belongs to the IspD/TarI cytidylyltransferase family. IspD subfamily. In terms of assembly, homodimer.

It catalyses the reaction 2-C-methyl-D-erythritol 4-phosphate + CTP + H(+) = 4-CDP-2-C-methyl-D-erythritol + diphosphate. Its pathway is isoprenoid biosynthesis; isopentenyl diphosphate biosynthesis via DXP pathway; isopentenyl diphosphate from 1-deoxy-D-xylulose 5-phosphate: step 2/6. In terms of biological role, catalyzes the formation of 4-diphosphocytidyl-2-C-methyl-D-erythritol from CTP and 2-C-methyl-D-erythritol 4-phosphate (MEP). This chain is 2-C-methyl-D-erythritol 4-phosphate cytidylyltransferase, found in Yersinia pseudotuberculosis serotype IB (strain PB1/+).